The primary structure comprises 211 residues: Redox-sensing transcriptional repressor Rex (211 aa).

Residues 18–57 (LYYRFIESLHAAGKQRVSSTELSQAVKVDSATIRRDFSYF) constitute a DNA-binding region (H-T-H motif). 92–97 (GVGNLG) is a binding site for NAD(+).

This sequence belongs to the transcriptional regulatory Rex family. Homodimer.

The protein localises to the cytoplasm. In terms of biological role, modulates transcription in response to changes in cellular NADH/NAD(+) redox state. This chain is Redox-sensing transcriptional repressor Rex, found in Shouchella clausii (strain KSM-K16) (Alkalihalobacillus clausii).